Consider the following 419-residue polypeptide: MVINAGAKLSIARLIRPTASYHPAIGGIRYYSAPPESTIPAAKLKYIPTSGTYPQGFLVSGTYVGVKPTNKSTPDLAFLASEIPCAAAAVFTKNKFQAAPVTVSRKMLQRRENAGIRSVIINSGCANAVTGKGGMEDAEKMVAEADRCYHAPKDGKGGSSIVMSTGVIGQRMAGMTKGAGMIHPNMATLLGMIATDAPIAPALLPSLLKNAVDKSFNSISIDGDTSTNDTVAVLANGVAGGKEVTSESSKDHAAFQKVLTEFAIDLAKLVVRDGEGATKFVTIRVTEAPSEIGARKIASTIARSPLVKTALYGKDANWGRILCATGYSQISEPGEPINKVPEIVPEKTSVSFIPSDGSPELKLLVNGEPESVDETRAAEILEHEDLEILINLGGGKEEAVYWTCDFSHEYVTINGDYRT.

Residues Lys177, Thr188, Glu275, Asn414, and Thr419 each contribute to the substrate site. Residue Thr188 is the Nucleophile of the active site.

It belongs to the ArgJ family. As to quaternary structure, heterodimer of an alpha and a beta chain. The alpha and beta chains are autoproteolytically processed from a single precursor protein within the mitochondrion.

The protein resides in the mitochondrion matrix. It carries out the reaction N(2)-acetyl-L-ornithine + L-glutamate = N-acetyl-L-glutamate + L-ornithine. The enzyme catalyses L-glutamate + acetyl-CoA = N-acetyl-L-glutamate + CoA + H(+). It participates in amino-acid biosynthesis; L-arginine biosynthesis; L-ornithine and N-acetyl-L-glutamate from L-glutamate and N(2)-acetyl-L-ornithine (cyclic): step 1/1. It functions in the pathway amino-acid biosynthesis; L-arginine biosynthesis; N(2)-acetyl-L-ornithine from L-glutamate: step 1/4. In terms of biological role, catalyzes two activities which are involved in the cyclic version of arginine biosynthesis: the synthesis of acetylglutamate from glutamate and acetyl-CoA, and of ornithine by transacetylation between acetylornithine and glutamate. In Sclerotinia sclerotiorum (strain ATCC 18683 / 1980 / Ss-1) (White mold), this protein is Arginine biosynthesis bifunctional protein ArgJ 1, mitochondrial.